The following is a 178-amino-acid chain: Acireductone dioxygenase (178 aa).

A disordered region spans residues 1 to 22 (MKAYWYDNKPGDQREPHDSGRP). The span at 9–22 (KPGDQREPHDSGRP) shows a compositional bias: basic and acidic residues. Fe(2+) is bound by residues His81, His83, Glu87, and His126. 4 residues coordinate Ni(2+): His81, His83, Glu87, and His126.

It belongs to the acireductone dioxygenase (ARD) family. Requires Fe(2+) as cofactor. The cofactor is Ni(2+).

The protein resides in the cytoplasm. It localises to the nucleus. The enzyme catalyses 1,2-dihydroxy-5-(methylsulfanyl)pent-1-en-3-one + O2 = 4-methylsulfanyl-2-oxobutanoate + formate + 2 H(+). It catalyses the reaction 1,2-dihydroxy-5-(methylsulfanyl)pent-1-en-3-one + O2 = 3-(methylsulfanyl)propanoate + CO + formate + 2 H(+). The protein operates within amino-acid biosynthesis; L-methionine biosynthesis via salvage pathway; L-methionine from S-methyl-5-thio-alpha-D-ribose 1-phosphate: step 5/6. Functionally, catalyzes 2 different reactions between oxygen and the acireductone 1,2-dihydroxy-3-keto-5-methylthiopentene (DHK-MTPene) depending upon the metal bound in the active site. Fe-containing acireductone dioxygenase (Fe-ARD) produces formate and 2-keto-4-methylthiobutyrate (KMTB), the alpha-ketoacid precursor of methionine in the methionine recycle pathway. Ni-containing acireductone dioxygenase (Ni-ARD) produces methylthiopropionate, carbon monoxide and formate, and does not lie on the methionine recycle pathway. The sequence is that of Acireductone dioxygenase (adi1) from Emericella nidulans (strain FGSC A4 / ATCC 38163 / CBS 112.46 / NRRL 194 / M139) (Aspergillus nidulans).